The sequence spans 400 residues: Exodeoxyribonuclease 7 large subunit (400 aa).

The protein belongs to the XseA family. Heterooligomer composed of large and small subunits.

The protein localises to the cytoplasm. It catalyses the reaction Exonucleolytic cleavage in either 5'- to 3'- or 3'- to 5'-direction to yield nucleoside 5'-phosphates.. In terms of biological role, bidirectionally degrades single-stranded DNA into large acid-insoluble oligonucleotides, which are then degraded further into small acid-soluble oligonucleotides. This Clostridium novyi (strain NT) protein is Exodeoxyribonuclease 7 large subunit.